Reading from the N-terminus, the 330-residue chain is Ferredoxin--NADP reductase (330 aa).

FAD is bound by residues Glu-35, Gln-43, Tyr-48, Val-90, Phe-123, Asp-285, and Thr-326.

Belongs to the ferredoxin--NADP reductase type 2 family. Homodimer. It depends on FAD as a cofactor.

The enzyme catalyses 2 reduced [2Fe-2S]-[ferredoxin] + NADP(+) + H(+) = 2 oxidized [2Fe-2S]-[ferredoxin] + NADPH. This chain is Ferredoxin--NADP reductase, found in Streptococcus pyogenes serotype M2 (strain MGAS10270).